Consider the following 83-residue polypeptide: Putative defensin-like protein 111 (83 aa).

A signal peptide spans 1–24; that stretch reads MAITKKILLPFVLTILFVISSVHC. 4 disulfide bridges follow: cysteine 40/cysteine 80, cysteine 46/cysteine 69, cysteine 54/cysteine 78, and cysteine 58/cysteine 79.

It belongs to the DEFL family.

The protein localises to the secreted. The sequence is that of Putative defensin-like protein 111 (LCR50) from Arabidopsis thaliana (Mouse-ear cress).